A 95-amino-acid chain; its full sequence is Small ubiquitin-related modifier 2-A (95 aa).

Residue Lys11 forms a Glycyl lysine isopeptide (Lys-Gly) (interchain with G-Cter in SUMO) linkage. In terms of domain architecture, Ubiquitin-like spans 16–95; the sequence is DHINLKVAGQ…VFQQQTGGSF (80 aa). A Glycyl lysine isopeptide (Gly-Lys) (interchain with K-? in acceptor proteins) cross-link involves residue Gly93. Residues 94–95 constitute a propeptide that is removed on maturation; the sequence is SF.

Belongs to the ubiquitin family. SUMO subfamily. Interacts with sae2 and ube2i. Covalently attached to a number of proteins, including top2. Post-translationally, polymeric chains can be formed through Lys-11 cross-linking. Cleavage of precursor form by a sentrin-specific protease is necessary for function.

It localises to the nucleus. Functionally, ubiquitin-like protein that can be covalently attached to proteins as a monomer or as a lysine-linked polymer. Covalent attachment via an isopeptide bond to its substrates requires prior activation by the E1 complex sae1-sae2 and linkage to the E2 enzyme ube2i, and can be promoted by an E3 ligase such as pias1-4. This post-translational modification on lysine residues of proteins plays a crucial role in a number of cellular processes such as nuclear transport, DNA replication and repair, mitosis and signal transduction. Polymeric sumo2 chains are also susceptible to polyubiquitination which functions as a signal for proteasomal degradation of modified proteins. The chain is Small ubiquitin-related modifier 2-A (sumo2-a) from Xenopus laevis (African clawed frog).